Consider the following 194-residue polypeptide: Large ribosomal subunit protein eL15 (194 aa).

The tract at residues 164–194 (AGRKARGLRRKGRGAEKVRPSLRANFRKKRR) is disordered. Positions 166–175 (RKARGLRRKG) are enriched in basic residues.

The protein belongs to the eukaryotic ribosomal protein eL15 family.

The polypeptide is Large ribosomal subunit protein eL15 (rpl15e) (Archaeoglobus fulgidus (strain ATCC 49558 / DSM 4304 / JCM 9628 / NBRC 100126 / VC-16)).